The sequence spans 340 residues: Ribonucleoside-diphosphate reductase subunit beta (340 aa).

2 residues coordinate Fe cation: D88 and H122. The active site involves Y126. H216 contacts Fe cation.

It belongs to the ribonucleoside diphosphate reductase small chain family. In terms of assembly, tetramer of two alpha and two beta subunits. Requires Fe cation as cofactor.

It carries out the reaction a 2'-deoxyribonucleoside 5'-diphosphate + [thioredoxin]-disulfide + H2O = a ribonucleoside 5'-diphosphate + [thioredoxin]-dithiol. Provides the precursors necessary for DNA synthesis. Catalyzes the biosynthesis of deoxyribonucleotides from the corresponding ribonucleotides. The sequence is that of Ribonucleoside-diphosphate reductase subunit beta (nrdF) from Mycoplasma genitalium (strain ATCC 33530 / DSM 19775 / NCTC 10195 / G37) (Mycoplasmoides genitalium).